Here is a 205-residue protein sequence, read N- to C-terminus: Large ribosomal subunit protein bL25 (205 aa).

Belongs to the bacterial ribosomal protein bL25 family. CTC subfamily. Part of the 50S ribosomal subunit; part of the 5S rRNA/L5/L18/L25 subcomplex. Contacts the 5S rRNA. Binds to the 5S rRNA independently of L5 and L18.

Its function is as follows. This is one of the proteins that binds to the 5S RNA in the ribosome where it forms part of the central protuberance. The protein is Large ribosomal subunit protein bL25 of Stutzerimonas stutzeri (strain A1501) (Pseudomonas stutzeri).